Consider the following 368-residue polypeptide: Quinolinate synthase (368 aa).

Iminosuccinate contacts are provided by histidine 46 and serine 63. A [4Fe-4S] cluster-binding site is contributed by cysteine 110. Iminosuccinate-binding positions include 141-143 (YVN) and serine 162. Residue cysteine 230 coordinates [4Fe-4S] cluster. Residues 256–258 (HPE) and threonine 273 each bind iminosuccinate. Residue cysteine 320 participates in [4Fe-4S] cluster binding.

This sequence belongs to the quinolinate synthase family. Type 3 subfamily. The cofactor is [4Fe-4S] cluster.

The protein localises to the cytoplasm. It carries out the reaction iminosuccinate + dihydroxyacetone phosphate = quinolinate + phosphate + 2 H2O + H(+). It participates in cofactor biosynthesis; NAD(+) biosynthesis; quinolinate from iminoaspartate: step 1/1. Catalyzes the condensation of iminoaspartate with dihydroxyacetone phosphate to form quinolinate. The chain is Quinolinate synthase from Bacillus cytotoxicus (strain DSM 22905 / CIP 110041 / 391-98 / NVH 391-98).